The sequence spans 100 residues: Large ribosomal subunit protein eL21 (100 aa).

A compositionally biased stretch (basic residues) spans 1-21 (MVKRTHGYRYKSRKLLRKKPR). Residues 1 to 22 (MVKRTHGYRYKSRKLLRKKPRE) form a disordered region.

The protein belongs to the eukaryotic ribosomal protein eL21 family.

In Pyrobaculum neutrophilum (strain DSM 2338 / JCM 9278 / NBRC 100436 / V24Sta) (Thermoproteus neutrophilus), this protein is Large ribosomal subunit protein eL21.